We begin with the raw amino-acid sequence, 651 residues long: Protein SCARECROW 1 (651 aa).

Disordered stretches follow at residues 1 to 33 (MGSSSLLLFPSSSSSATHSSYSPSSSSHAITSL) and 188 to 277 (SDPA…KQRD). The span at 190 to 228 (PAPPPPPPPSHPALLPPDATAPPPPPTSVAALPPPPPPQ) shows a compositional bias: pro residues. Residues 253 to 280 (TAEETAAAAAAAKERKEEQRRKQRDEEG) are a coiled coil. Residues 254-263 (AEETAAAAAA) are compositionally biased toward low complexity. Residues 264-277 (AKERKEEQRRKQRD) are compositionally biased toward basic and acidic residues. Residues 274–644 (KQRDEEGLHL…LCLLTASAWR (371 aa)) form the GRAS domain. The interval 281 to 345 (LHLLTLLLQC…VSSCLGLYAP (65 aa)) is leucine repeat I (LRI). The LxCxE motif motif lies at 288–292 (LQCAE). Positions 364–429 (FQVFNGISPF…GGPPRVRLTG (66 aa)) are VHIID. The VHIID signature appears at 395-399 (VHIID). The interval 439–471 (ATGKRLSDFADTLGLPFEFCPVADKAGNLDPEK) is leucine repeat II (LRII). A PFYRE region spans residues 480–567 (VAVHWLRHSL…QQLLSREIRN (88 aa)). The SAW stretch occupies residues 570–644 (AVGGPARTGD…LCLLTASAWR (75 aa)).

This sequence belongs to the GRAS family. In terms of assembly, interacts with SHR1, but not with SHR2. In terms of tissue distribution, expressed in the initial daughter cell before its asymmetric division and remains expressed in the endodermal cell layer after the division.

It is found in the nucleus. Its function is as follows. Transcription factor required for quiescent center cells specification and maintenance of surrounding stem cells, and for the asymmetric cell division involved in radial pattern formation in roots. Essential for cell division but not differentiation of the ground tissue. Regulates the radial organization of the shoot axial organs. Restricts SHR movment and sequesters it into the nucleus of the endodermis. This chain is Protein SCARECROW 1 (SCR1), found in Oryza sativa subsp. japonica (Rice).